The following is a 341-amino-acid chain: General L-amino acid-binding periplasmic protein AapJ (341 aa).

Residues 1 to 23 (MKNKLLSAAIGAAVLAVGASAAS) form the signal peptide.

The protein belongs to the bacterial solute-binding protein 3 family. The complex is composed of two ATP-binding proteins (AapP), two transmembrane proteins (AapM and AapQ) and a solute-binding protein (AapJ).

It localises to the periplasm. Functionally, part of the ABC transporter complex AapJQMP involved in uptake of L-amino acids. Affects the efflux of these amino acids as well. Essential for the development of bacteroids, the differentiated legume-symbiotic forms of this bacterium, and for the effective N(2) fixation by them. The polypeptide is General L-amino acid-binding periplasmic protein AapJ (aapJ) (Rhizobium johnstonii (strain DSM 114642 / LMG 32736 / 3841) (Rhizobium leguminosarum bv. viciae)).